The following is a 246-amino-acid chain: 1-(5-phosphoribosyl)-5-[(5-phosphoribosylamino)methylideneamino] imidazole-4-carboxamide isomerase (246 aa).

Catalysis depends on aspartate 8, which acts as the Proton acceptor. The Proton donor role is filled by aspartate 131.

Belongs to the HisA/HisF family.

Its subcellular location is the cytoplasm. The catalysed reaction is 1-(5-phospho-beta-D-ribosyl)-5-[(5-phospho-beta-D-ribosylamino)methylideneamino]imidazole-4-carboxamide = 5-[(5-phospho-1-deoxy-D-ribulos-1-ylimino)methylamino]-1-(5-phospho-beta-D-ribosyl)imidazole-4-carboxamide. It participates in amino-acid biosynthesis; L-histidine biosynthesis; L-histidine from 5-phospho-alpha-D-ribose 1-diphosphate: step 4/9. The chain is 1-(5-phosphoribosyl)-5-[(5-phosphoribosylamino)methylideneamino] imidazole-4-carboxamide isomerase from Bordetella petrii (strain ATCC BAA-461 / DSM 12804 / CCUG 43448).